A 695-amino-acid chain; its full sequence is HIPL1 protein (695 aa).

An N-terminal signal peptide occupies residues 1–23 (MKLHQFLVFLFLFLSCFALSSWA). Residues Asn37, Asn67, Asn107, Asn113, Asn128, Asn151, Asn175, Asn190, Asn208, Asn337, Asn429, Asn511, Asn527, Asn641, and Asn648 are each glycosylated (N-linked (GlcNAc...) asparagine). A lipid anchor (GPI-anchor amidated serine) is attached at Ser665. Positions 666-695 (SSCYKHINGFHGSLVVLFVSLSLILLGLLN) are cleaved as a propeptide — removed in mature form.

The protein belongs to the PQQ oxidoreductase GdhB family. The cofactor is pyrroloquinoline quinone.

It localises to the cell membrane. The chain is HIPL1 protein (HIPL1) from Arabidopsis thaliana (Mouse-ear cress).